The following is a 61-amino-acid chain: Phosphoenolpyruvate synthase (61 aa).

This sequence belongs to the PEP-utilizing enzyme family. The cofactor is Mg(2+).

It catalyses the reaction pyruvate + ATP + H2O = phosphoenolpyruvate + AMP + phosphate + 2 H(+). It participates in carbohydrate biosynthesis; gluconeogenesis. Its function is as follows. Catalyzes the phosphorylation of pyruvate to phosphoenolpyruvate. The polypeptide is Phosphoenolpyruvate synthase (ppsA) (Enterobacter agglomerans (Erwinia herbicola)).